The chain runs to 652 residues: MSNDTSPGTSSVDSKSSDPSYGVPGHSHSDKDLLKLSLGAIGIVFGDIGTSPLYALKECFKGHHQLPVDDFHIYGLVSLIFWTMGLVVTVKYVMFIMKADNKGEGGSMSLLSLIIRGANPKLSRWLIVLGVFATALFYGDSMITPAMSVLSAVEGLTVIEPSFDSWVPPVSVVILIGLFCIQARGTESVGRLFGPIMLVYFATLAILGAFNIITRSPAILLALNPYYAIHFFASDPLQGFWALGSVVLSVTGAEALYADMGHFGRQPISLGWYWVVFPALTLNYLGQCALLSADHEAIANPFYFLAPDFLRVPLIILATFAAVIASQAVITGAFSVTQQAIQLGYIPRLRVNHTSASTVGQIYIPSVNWVLMFMVMVLIAMFKNSTNLANAYGIAVTGTMFITSCMMGVLVHRVWHWKAWQSIPLVSFFLLIDGAFFLSNVTKIPEGGWFPLLVGFVVFTMLMTWSRGRHLMAERMRQVAMPIQLFIRSAAASAVRIPGTAIFLTPEDDGVPHALLHNLKHNKILHERVILLTVKIEDVPYVDPHYRASMSSLEDGFYRLIVRYGFMEEPDVPLALNKIEQSGPMLRMDDTSFFISRQTLIPSTHTSMAIWREKLFAWMLRNSESATEFFKLPSNRVVELGSQIELVGSNGK.

A compositionally biased stretch (low complexity) spans 1-20 (MSNDTSPGTSSVDSKSSDPS). The interval 1–26 (MSNDTSPGTSSVDSKSSDPSYGVPGH) is disordered. 12 helical membrane-spanning segments follow: residues 36 to 56 (LSLGAIGIVFGDIGTSPLYAL), 76 to 96 (LVSLIFWTMGLVVTVKYVMFI), 125 to 145 (WLIVLGVFATALFYGDSMITP), 161 to 181 (PSFDSWVPPVSVVILIGLFCI), 193 to 213 (FGPIMLVYFATLAILGAFNII), 228 to 248 (AIHFFASDPLQGFWALGSVVL), 270 to 290 (LGWYWVVFPALTLNYLGQCAL), 314 to 334 (LIILATFAAVIASQAVITGAF), 362 to 382 (IYIPSVNWVLMFMVMVLIAMF), 391 to 411 (AYGIAVTGTMFITSCMMGVLV), 419 to 439 (AWQSIPLVSFFLLIDGAFFLS), and 444 to 464 (IPEGGWFPLLVGFVVFTMLMT).

Belongs to the HAK/KUP transporter (TC 2.A.72) family.

The protein resides in the cell inner membrane. The catalysed reaction is K(+)(in) + H(+)(in) = K(+)(out) + H(+)(out). Its function is as follows. Transport of potassium into the cell. Likely operates as a K(+):H(+) symporter. This chain is Probable potassium transport system protein Kup, found in Zymomonas mobilis subsp. mobilis (strain ATCC 31821 / ZM4 / CP4).